Reading from the N-terminus, the 259-residue chain is L-erythrulose-1-phosphate isomerase (259 aa).

Catalysis depends on His-102, which acts as the Electrophile. Glu-174 acts as the Proton acceptor in catalysis.

The protein belongs to the triosephosphate isomerase family.

The catalysed reaction is L-erythrulose 1-phosphate = D-erythrulose 4-phosphate. Its pathway is carbohydrate metabolism. Its function is as follows. Involved in catabolism of D-apiose. Catalyzes the isomerization of L-erythrulose 1-phosphate to D-erythrulose 4-phosphate. In Pectobacterium atrosepticum (strain SCRI 1043 / ATCC BAA-672) (Erwinia carotovora subsp. atroseptica), this protein is L-erythrulose-1-phosphate isomerase.